The primary structure comprises 412 residues: Multifunctional CCA protein (412 aa).

Positions 8 and 11 each coordinate ATP. Positions 8 and 11 each coordinate CTP. The Mg(2+) site is built by glutamate 21 and aspartate 23. Residues arginine 91, arginine 137, and arginine 140 each coordinate ATP. CTP-binding residues include arginine 91, arginine 137, and arginine 140. One can recognise an HD domain in the interval 228–329; sequence CGIHTLMSLQ…WRLLQRLDVL (102 aa).

This sequence belongs to the tRNA nucleotidyltransferase/poly(A) polymerase family. Bacterial CCA-adding enzyme type 1 subfamily. Monomer. Can also form homodimers and oligomers. Mg(2+) serves as cofactor. It depends on Ni(2+) as a cofactor.

It catalyses the reaction a tRNA precursor + 2 CTP + ATP = a tRNA with a 3' CCA end + 3 diphosphate. The catalysed reaction is a tRNA with a 3' CCA end + 2 CTP + ATP = a tRNA with a 3' CCACCA end + 3 diphosphate. Its function is as follows. Catalyzes the addition and repair of the essential 3'-terminal CCA sequence in tRNAs without using a nucleic acid template. Adds these three nucleotides in the order of C, C, and A to the tRNA nucleotide-73, using CTP and ATP as substrates and producing inorganic pyrophosphate. tRNA 3'-terminal CCA addition is required both for tRNA processing and repair. Also involved in tRNA surveillance by mediating tandem CCA addition to generate a CCACCA at the 3' terminus of unstable tRNAs. While stable tRNAs receive only 3'-terminal CCA, unstable tRNAs are marked with CCACCA and rapidly degraded. The protein is Multifunctional CCA protein of Acinetobacter baumannii (strain ATCC 17978 / DSM 105126 / CIP 53.77 / LMG 1025 / NCDC KC755 / 5377).